The sequence spans 493 residues: MQEGTDPYGEIEISFGYQCNNKKIGIPEDKIADGREVLGGFRLQKTSSFSCLSGAALSGNPTLANTNICNGVIGSEILPSLDSPKSFRKVPSSPALSKLDILSPSLHGSMVSLSCSSSTSPSPPEPESCYLTSMSSPSSVNEGFLLSAMEVQVAGGAAGEDRVQAVCSEENGWLFCAIYDGFNGRDAADFLACTLYESIVFHLQLLDRQMKQTKSDDDGEKLELLSNISNVDYSSTDLFRQGVLDCLNRALFQAETDFLRMVEQEMEERPDLVSVGSCVLVTLLVGKDLYVLNLGDSRAVLATYNGNKKLQAVQLTEDHTVDNEVEEARLLSEHLDDPKIVIGGKIKGKLKVTRALGVGYLKKEKLNDALMGILRVRNLLSPPYVSVEPSMRVHKITESDHFVIVASDGLFDFFSNEEAIGLVHSFVSSNPSGDPAKFLLERLVAKAAARAGFTLEELTNVPAGRRRRYHDDVTIMVITLGTDQRTSKASTFV.

Residues 145 to 480 form the PPM-type phosphatase domain; it reads LLSAMEVQVA…DDVTIMVITL (336 aa). Residues Asp180, Gly181, Asp408, and Asp471 each coordinate Mn(2+).

This sequence belongs to the PP2C family. Mg(2+) is required as a cofactor. It depends on Mn(2+) as a cofactor.

The catalysed reaction is O-phospho-L-seryl-[protein] + H2O = L-seryl-[protein] + phosphate. The enzyme catalyses O-phospho-L-threonyl-[protein] + H2O = L-threonyl-[protein] + phosphate. The polypeptide is Probable protein phosphatase 2C 40 (Arabidopsis thaliana (Mouse-ear cress)).